The following is a 616-amino-acid chain: Schwannomin-interacting protein 1 homolog (616 aa).

Acidic residues predominate over residues 38 to 50 (ESDLTDSDREDDP). Disordered stretches follow at residues 38 to 71 (ESDL…GQDS), 204 to 251 (LKQT…PDTF), and 292 to 320 (SSLE…YSNQ). Composition is skewed to polar residues over residues 62–71 (SETFKNGQDS) and 204–217 (LKQT…GNST). Residues 550-594 (LQLLVNNLQEYIENLNVTLLESLKERDDLNSDQDDILHDLEKINN) adopt a coiled-coil conformation.

The protein belongs to the SCHIP1 family. In terms of assembly, interacts with ex; the interaction results in recruitment of Schip1 to the apical cell membrane. Interacts with Tao; the interaction enhances Tao kinase activity. Interacts with Mer. As to expression, in eye disks of the third instar larvae, expressed in all cells (at protein level).

The protein resides in the cell junction. It localises to the adherens junction. The protein localises to the apical cell membrane. Functionally, regulator of the Hippo/SWH (Sav/Wts/Hpo) signaling pathway, a signaling pathway that plays a pivotal role in organ size control and tumor suppression by restricting proliferation and promoting apoptosis. The core of this pathway is composed of a kinase cascade wherein Hippo (hpo), in complex with its regulatory protein Salvador (sav), phosphorylates and activates Warts (wts) in complex with its regulatory protein Mats, which in turn phosphorylates and inactivates the Yorkie (yki) oncoprotein. Schip1 promotes kinase activity of Tao and enhances phosphorylation of hpo by Tao. The polypeptide is Schwannomin-interacting protein 1 homolog (Drosophila melanogaster (Fruit fly)).